Here is a 375-residue protein sequence, read N- to C-terminus: Antichymotrypsin-2 (375 aa).

This sequence belongs to the serpin family. Hemolymph.

The protein localises to the secreted. This chain is Antichymotrypsin-2, found in Bombyx mori (Silk moth).